The sequence spans 418 residues: Serine hydroxymethyltransferase (418 aa).

(6S)-5,6,7,8-tetrahydrofolate-binding positions include Leu121 and Gly125–Leu127. Lys230 bears the N6-(pyridoxal phosphate)lysine mark. Residue Ser355–Phe357 coordinates (6S)-5,6,7,8-tetrahydrofolate.

The protein belongs to the SHMT family. As to quaternary structure, homodimer. Pyridoxal 5'-phosphate serves as cofactor.

It is found in the cytoplasm. It catalyses the reaction (6R)-5,10-methylene-5,6,7,8-tetrahydrofolate + glycine + H2O = (6S)-5,6,7,8-tetrahydrofolate + L-serine. It participates in one-carbon metabolism; tetrahydrofolate interconversion. Its pathway is amino-acid biosynthesis; glycine biosynthesis; glycine from L-serine: step 1/1. Its function is as follows. Catalyzes the reversible interconversion of serine and glycine with tetrahydrofolate (THF) serving as the one-carbon carrier. This reaction serves as the major source of one-carbon groups required for the biosynthesis of purines, thymidylate, methionine, and other important biomolecules. Also exhibits THF-independent aldolase activity toward beta-hydroxyamino acids, producing glycine and aldehydes, via a retro-aldol mechanism. The sequence is that of Serine hydroxymethyltransferase from Streptococcus agalactiae serotype V (strain ATCC BAA-611 / 2603 V/R).